We begin with the raw amino-acid sequence, 237 residues long: Putative HTH-type transcriptional regulator ycf28 (237 aa).

In terms of domain architecture, HTH crp-type spans 155–228; it reads KSITNRLISL…KKKVIIHDPI (74 aa). Positions 188–207 form a DNA-binding region, H-T-H motif; the sequence is HKVLAQIIGSNRVSITRIIS.

The protein resides in the plastid. It localises to the chloroplast. The sequence is that of Putative HTH-type transcriptional regulator ycf28 (ycf28) from Porphyra purpurea (Red seaweed).